Consider the following 934-residue polypeptide: UPF0182 protein sync_1321 (934 aa).

Helical transmembrane passes span 2–22, 45–65, 86–106, 129–149, 165–185, 208–228, 251–271, 300–320, and 327–347; these read AKIIWTIGRFGLLLIPLIVII, LLLQLGGALFAFLFVGSCALW, GYRYGFCLLACLLVLLSVLAI, FSTGWPLLSLSILMLTLIMFG, VCICLIVARSWGLWSLAFSIP, IAFGLELVLLQLSLTLSTALW, HGLRPGFALVLMSFSGLMWLS, LGSIALLVLAFVVLPSPFSSV, and LILAFIAIASFGLEMVLFPLM.

Belongs to the UPF0182 family.

Its subcellular location is the cell membrane. The chain is UPF0182 protein sync_1321 from Synechococcus sp. (strain CC9311).